A 282-amino-acid polypeptide reads, in one-letter code: Bis(5'-nucleosyl)-tetraphosphatase, symmetrical (282 aa).

This sequence belongs to the Ap4A hydrolase family.

It carries out the reaction P(1),P(4)-bis(5'-adenosyl) tetraphosphate + H2O = 2 ADP + 2 H(+). Functionally, hydrolyzes diadenosine 5',5'''-P1,P4-tetraphosphate to yield ADP. In Salmonella arizonae (strain ATCC BAA-731 / CDC346-86 / RSK2980), this protein is Bis(5'-nucleosyl)-tetraphosphatase, symmetrical.